A 58-amino-acid polypeptide reads, in one-letter code: Large ribosomal subunit protein bL32 (58 aa).

This sequence belongs to the bacterial ribosomal protein bL32 family.

This Caldicellulosiruptor bescii (strain ATCC BAA-1888 / DSM 6725 / KCTC 15123 / Z-1320) (Anaerocellum thermophilum) protein is Large ribosomal subunit protein bL32.